The following is a 272-amino-acid chain: 2-succinyl-6-hydroxy-2,4-cyclohexadiene-1-carboxylate synthase (272 aa).

Belongs to the AB hydrolase superfamily. MenH family. Monomer.

The enzyme catalyses 5-enolpyruvoyl-6-hydroxy-2-succinyl-cyclohex-3-ene-1-carboxylate = (1R,6R)-6-hydroxy-2-succinyl-cyclohexa-2,4-diene-1-carboxylate + pyruvate. The protein operates within quinol/quinone metabolism; 1,4-dihydroxy-2-naphthoate biosynthesis; 1,4-dihydroxy-2-naphthoate from chorismate: step 3/7. It participates in quinol/quinone metabolism; menaquinone biosynthesis. Catalyzes a proton abstraction reaction that results in 2,5-elimination of pyruvate from 2-succinyl-5-enolpyruvyl-6-hydroxy-3-cyclohexene-1-carboxylate (SEPHCHC) and the formation of 2-succinyl-6-hydroxy-2,4-cyclohexadiene-1-carboxylate (SHCHC). This chain is 2-succinyl-6-hydroxy-2,4-cyclohexadiene-1-carboxylate synthase, found in Yersinia pseudotuberculosis serotype O:1b (strain IP 31758).